A 187-amino-acid chain; its full sequence is Tetraheme c-type cytochrome CymA (187 aa).

The Cytoplasmic portion of the chain corresponds to Met1–Lys12. The helical transmembrane segment at Tyr13–Thr33 threads the bilayer. Residues Gln34–Gly187 lie on the Periplasmic side of the membrane. 14 residues coordinate heme c: Cys46, Cys49, His64, Cys75, Cys78, His79, Asp97, Cys136, Cys139, His140, Cys173, Cys176, His177, and His182.

Belongs to the NapC/NirT/NrfH family. In terms of assembly, homodimer. Requires heme c as cofactor.

The protein localises to the cell inner membrane. The catalysed reaction is a quinol + 2 Fe(III)-[cytochrome c](out) = a quinone + 2 Fe(II)-[cytochrome c](out) + 2 H(+)(out). Its activity is regulated as follows. Spectroscopic studies suggest that CymA requires a non-heme cofactor for quinol oxidation. Quinol dehydrogenase involved in several anaerobic electron transfer pathways. Acquires electrons from the membrane quinone pool and mediates their transfer to several periplasmic terminal reductases and redox shuttles, including the fumarate reductase FccA, the small tetraheme cytochrome (STC), the c-type cytochrome MtrA, the nitrate reductase NapA (either through NapB or directly), the nitrite reductase NrfA and probably also the DmsE subunit of dimethyl sulfoxide (DMSO) reductase. Required for growth on fumarate and on DMSO, and for the reduction of iron(III), manganese(IV), nitrite and nitrate. Not essential for growth on trimethylamine-N-oxide (TMAO). This chain is Tetraheme c-type cytochrome CymA, found in Shewanella oneidensis (strain ATCC 700550 / JCM 31522 / CIP 106686 / LMG 19005 / NCIMB 14063 / MR-1).